Here is an 84-residue protein sequence, read N- to C-terminus: uncharacterized protein (84 aa).

The segment covering 1 to 14 has biased composition (low complexity); that stretch reads MQKLNKSSSKGKNN. The disordered stretch occupies residues 1 to 84; sequence MQKLNKSSSK…VDKGERKESE (84 aa). The span at 28–40 shows a compositional bias: gly residues; it reads STYGFGPYGGGGF. Basic and acidic residues-rich tracts occupy residues 53–65 and 73–84; these read DTKKLKGEVEEGT and KLVDKGERKESE.

This is an uncharacterized protein from Schizosaccharomyces pombe (strain 972 / ATCC 24843) (Fission yeast).